We begin with the raw amino-acid sequence, 501 residues long: Sarpagan bridge enzyme (501 aa).

Residues 3 to 23 (VMQLSFSYPALFLFVFFLFML) traverse the membrane as a helical; Signal-anchor for type II membrane protein segment. Cysteine 441 is a heme binding site.

The protein belongs to the cytochrome P450 family. Heme is required as a cofactor. In terms of tissue distribution, highly expressed in roots. Expressed at low levels in stems.

The protein localises to the endoplasmic reticulum membrane. The enzyme catalyses (19E)-geissoschizine + reduced [NADPH--hemoprotein reductase] + O2 = polyneuridine aldehyde + oxidized [NADPH--hemoprotein reductase] + 2 H2O + H(+). It carries out the reaction tetrahydroalstonine + A + reduced [NADPH--hemoprotein reductase] + O2 = alstonine + AH2 + oxidized [NADPH--hemoprotein reductase] + 2 H2O + H(+). The catalysed reaction is ajmalicine + A + reduced [NADPH--hemoprotein reductase] + O2 = serpentine + AH2 + oxidized [NADPH--hemoprotein reductase] + 2 H2O + H(+). Its pathway is alkaloid biosynthesis; ajmaline biosynthesis. Monooxygenase involved in the biosynthesis of ajmaline-type monoterpenoid indole alkaloids (MIAs) natural products, important plant-derived pharmaceuticals used in the therapy of heart disorders. Converts by cyclization the strictosidine-derived geissoschizine to the sarpagan alkaloid polyneuridine aldehyde, precursor of vomilenine, an intermediate chemical in the biosynthesis of ajmaline. Converts by aromatization the tetrahydro-beta-carboline alkaloids tetrahydroalstonine and ajmalicine to the corresponding beta-carboline alkaloids alstonine and serpentine, respectively. This Gelsemium sempervirens (Carolina jasmine) protein is Sarpagan bridge enzyme.